The primary structure comprises 134 residues: Spermadhesin-1 (134 aa).

The signal sequence occupies residues M1–S20. Intrachain disulfides connect C30–C51 and C74–C95. Residues C30–D131 enclose the CUB domain.

The protein belongs to the spermadhesin family. In terms of tissue distribution, seminal vesicle tissue, ampulla and weakly in tissue of epididymis.

It is found in the secreted. Stimulates cell division and progesterone secretion of bovine granulosa cells in vitro in a potent and dose dependent manner. This protein appears to be a potent growth factor with effects on ovarian granulosa cells. The polypeptide is Spermadhesin-1 (SPADH1) (Bos taurus (Bovine)).